An 85-amino-acid chain; its full sequence is Large ribosomal subunit protein bL31B (85 aa).

It belongs to the bacterial ribosomal protein bL31 family. Type B subfamily. Part of the 50S ribosomal subunit.

The polypeptide is Large ribosomal subunit protein bL31B (Micrococcus luteus (strain ATCC 4698 / DSM 20030 / JCM 1464 / CCM 169 / CCUG 5858 / IAM 1056 / NBRC 3333 / NCIMB 9278 / NCTC 2665 / VKM Ac-2230) (Micrococcus lysodeikticus)).